Consider the following 134-residue polypeptide: Ribonuclease VapC (134 aa).

Residues 4–124 enclose the PINc domain; the sequence is IVDTSIIIAL…NTKDFKRIPE (121 aa). Asp-6 provides a ligand contact to Mg(2+).

It belongs to the PINc/VapC protein family. Requires Mg(2+) as cofactor.

In terms of biological role, toxic component of a type II toxin-antitoxin (TA) system. Has ssRNase activity. Its RNase activity is partially neutralized by cognate antitoxin VapB. Rapidly induces apoptosis upon microinjection into mouse fibroblasts (L929 line). Probably contributes to host cell death if bacterial cell lysis occurs during host infection. This Rickettsia bellii (strain RML369-C) protein is Ribonuclease VapC.